The sequence spans 293 residues: Pyridoxal 5'-phosphate synthase subunit PdxS (293 aa).

Residue Asp25 coordinates D-ribose 5-phosphate. The Schiff-base intermediate with D-ribose 5-phosphate role is filled by Lys82. Asp103 contributes to the D-ribulose 5-phosphate binding site. Gly154 is a binding site for D-ribose 5-phosphate. Arg166 is a D-glyceraldehyde 3-phosphate binding site. D-ribose 5-phosphate contacts are provided by residues Gly215 and 236–237 (GS).

Belongs to the PdxS/SNZ family. In terms of assembly, homohexamer and homododecamer. In the presence of PdxT, forms a dodecamer of heterodimers.

It catalyses the reaction aldehydo-D-ribose 5-phosphate + D-glyceraldehyde 3-phosphate + L-glutamine = pyridoxal 5'-phosphate + L-glutamate + phosphate + 3 H2O + H(+). It functions in the pathway cofactor biosynthesis; pyridoxal 5'-phosphate biosynthesis. In terms of biological role, catalyzes the formation of pyridoxal 5'-phosphate from ribose 5-phosphate (RBP), glyceraldehyde 3-phosphate (G3P) and ammonia. The ammonia is provided by the PdxT subunit. Can also use ribulose 5-phosphate and dihydroxyacetone phosphate as substrates, resulting from enzyme-catalyzed isomerization of RBP and G3P, respectively. The polypeptide is Pyridoxal 5'-phosphate synthase subunit PdxS (Thermotoga maritima (strain ATCC 43589 / DSM 3109 / JCM 10099 / NBRC 100826 / MSB8)).